A 300-amino-acid polypeptide reads, in one-letter code: Protease HtpX (300 aa).

2 helical membrane-spanning segments follow: residues 4–24 (ILLF…TLRL) and 40–60 (SLLI…LFIS). Zn(2+) is bound at residue His-145. Glu-146 is a catalytic residue. Residue His-149 coordinates Zn(2+). The next 2 helical transmembrane spans lie at 153–173 (GDMV…MFFA) and 193–213 (LGFF…GLVA). Glu-225 serves as a coordination point for Zn(2+).

The protein belongs to the peptidase M48B family. Requires Zn(2+) as cofactor.

It localises to the cell inner membrane. This chain is Protease HtpX, found in Chromohalobacter salexigens (strain ATCC BAA-138 / DSM 3043 / CIP 106854 / NCIMB 13768 / 1H11).